Consider the following 1031-residue polypeptide: Pre-mRNA-splicing factor SYF1 (1031 aa).

HAT repeat units follow at residues 28–60 (HLIP…NVKE), 90–122 (DGLQ…TRQS), 214–248 (KNGS…WAEI), and 250–269 (GGDA…PSLT). The tract at residues 346–368 (VEEKVDGEQPQVEGQEQQPQEEP) is disordered. Over residues 353–368 (EQPQVEGQEQQPQEEP) the composition is skewed to low complexity. 8 HAT repeats span residues 452-487 (GEFE…FSET), 610-646 (PDLE…MELR), 664-698 (PKNT…LEES), 700-732 (GTVE…FLEE), 734-768 (KYFE…KFVK), 773-807 (KKLE…LEEE), 845-879 (FGLP…MERK), and 881-915 (GEID…FEIE). Disordered regions lie at residues 948 to 969 (AAAS…QDAA) and 1003 to 1031 (TNAN…EDEF).

This sequence belongs to the crooked-neck family. Associated with the spliceosome.

The protein resides in the nucleus. In terms of biological role, involved in pre-mRNA splicing and cell cycle progression. This is Pre-mRNA-splicing factor SYF1 (SYF1) from Cryptococcus neoformans var. neoformans serotype D (strain B-3501A) (Filobasidiella neoformans).